Reading from the N-terminus, the 284-residue chain is Tropomyosin-2 (284 aa).

The stretch at 1 to 284 (MDAIKKKMQA…DQTFAELTGY (284 aa)) forms a coiled coil. A disordered region spans residues 82 to 110 (ESEVATQNRKVQQIEEDLEKSEERSTTAQ).

It belongs to the tropomyosin family. As to quaternary structure, homodimer.

Tropomyosin, in association with the troponin complex, plays a central role in the calcium dependent regulation of muscle contraction. May also regulate motor systems required to maintain nuclear integrity and apico-basal polarity during embryogenesis. This Drosophila melanogaster (Fruit fly) protein is Tropomyosin-2 (Tm2).